Consider the following 363-residue polypeptide: Phospho-N-acetylmuramoyl-pentapeptide-transferase (363 aa).

A run of 10 helical transmembrane segments spans residues 3-23 (TVLI…PLYI), 55-75 (VVII…TGAL), 76-96 (PTVS…VGFL), 116-136 (LAGQ…FPAA), 158-178 (LAVF…LIIT), 190-210 (GLDG…VLIC), 237-257 (LAVV…WNAS), 261-281 (IFMG…LAIL), 286-306 (ILLV…ILQV), and 340-360 (FWII…AEWV).

It belongs to the glycosyltransferase 4 family. MraY subfamily. Mg(2+) serves as cofactor.

Its subcellular location is the cell membrane. It carries out the reaction UDP-N-acetyl-alpha-D-muramoyl-L-alanyl-gamma-D-glutamyl-meso-2,6-diaminopimeloyl-D-alanyl-D-alanine + di-trans,octa-cis-undecaprenyl phosphate = di-trans,octa-cis-undecaprenyl diphospho-N-acetyl-alpha-D-muramoyl-L-alanyl-D-glutamyl-meso-2,6-diaminopimeloyl-D-alanyl-D-alanine + UMP. It functions in the pathway cell wall biogenesis; peptidoglycan biosynthesis. In terms of biological role, catalyzes the initial step of the lipid cycle reactions in the biosynthesis of the cell wall peptidoglycan: transfers peptidoglycan precursor phospho-MurNAc-pentapeptide from UDP-MurNAc-pentapeptide onto the lipid carrier undecaprenyl phosphate, yielding undecaprenyl-pyrophosphoryl-MurNAc-pentapeptide, known as lipid I. This chain is Phospho-N-acetylmuramoyl-pentapeptide-transferase, found in Kineococcus radiotolerans (strain ATCC BAA-149 / DSM 14245 / SRS30216).